The sequence spans 68 residues: Copper transport protein ATOX1 (68 aa).

Positions 1-63 (MPKHEFSVDM…TLNKTGKAVS (63 aa)) constitute an HMA domain. Cu cation contacts are provided by Cys-12 and Cys-15. At Ser-47 the chain carries Phosphoserine. An N6-acetyllysine modification is found at Lys-60.

This sequence belongs to the ATX1 family. As to quaternary structure, homodimer. Interacts with ATP7B. Interacts with ATP7A. Interacts (via dimer form) with SLC31A1 (via C-terminal domain); this interaction improves ATOX1 stability and controls intracellular Cu(I) levels.

In terms of biological role, binds and deliver cytosolic copper to the copper ATPase proteins. May be important in cellular antioxidant defense. In Mus musculus (Mouse), this protein is Copper transport protein ATOX1.